The primary structure comprises 194 residues: MYKNGFFKNYLSLLLIFLVIACTSKDSSNEYVEEQEAENSSKPDDSKIDEHTIGHVFHAMGVVHSKKDRKSLGENIKVFYFSEEDGHFQTIPSKENAKLIVYFYDNVYAGEAPISISGKEAFIFVGITSDFKKIINSNLHGAKSDLIGTFKDLNIKNSKLEITVDENNSDAKTFLESVNYIIDGVEKISPMLTN.

Residues 1–21 (MYKNGFFKNYLSLLLIFLVIA) form the signal peptide. Residue cysteine 22 is the site of N-palmitoyl cysteine attachment. Cysteine 22 carries the S-diacylglycerol cysteine lipid modification.

The protein resides in the cell outer membrane. The chain is Outer surface 22 kDa lipoprotein (p22) from Borreliella burgdorferi (strain N40) (Borrelia burgdorferi).